Reading from the N-terminus, the 378-residue chain is Quinolinate synthase (378 aa).

H59 and S80 together coordinate iminosuccinate. C125 contacts [4Fe-4S] cluster. Residues 151–153 (YAN) and S168 contribute to the iminosuccinate site. C212 contributes to the [4Fe-4S] cluster binding site. Iminosuccinate contacts are provided by residues 238–240 (HPE) and T255. C309 contacts [4Fe-4S] cluster.

The protein belongs to the quinolinate synthase family. Type 1 subfamily. [4Fe-4S] cluster is required as a cofactor.

The protein localises to the cytoplasm. The enzyme catalyses iminosuccinate + dihydroxyacetone phosphate = quinolinate + phosphate + 2 H2O + H(+). It functions in the pathway cofactor biosynthesis; NAD(+) biosynthesis; quinolinate from iminoaspartate: step 1/1. Its function is as follows. Catalyzes the condensation of iminoaspartate with dihydroxyacetone phosphate to form quinolinate. This Burkholderia lata (strain ATCC 17760 / DSM 23089 / LMG 22485 / NCIMB 9086 / R18194 / 383) protein is Quinolinate synthase.